Consider the following 78-residue polypeptide: Large ribosomal subunit protein bL28 (78 aa).

This sequence belongs to the bacterial ribosomal protein bL28 family.

This is Large ribosomal subunit protein bL28 (rpmB) from Xylella fastidiosa (strain 9a5c).